We begin with the raw amino-acid sequence, 199 residues long: NAD(P)H dehydrogenase (quinone) (199 aa).

In terms of domain architecture, Flavodoxin-like spans 4–190 (VLVLYYSAYG…EAAKYQGAHV (187 aa)). Residues 10 to 15 (SAYGHI) and 78 to 80 (TRF) contribute to the FMN site. Tyr12 is a binding site for NAD(+). Substrate is bound at residue Trp98. FMN-binding positions include 113-119 (SSATQHG) and His134.

It belongs to the WrbA family. The cofactor is FMN.

It carries out the reaction a quinone + NADH + H(+) = a quinol + NAD(+). The catalysed reaction is a quinone + NADPH + H(+) = a quinol + NADP(+). The polypeptide is NAD(P)H dehydrogenase (quinone) (Rhizobium rhizogenes (strain K84 / ATCC BAA-868) (Agrobacterium radiobacter)).